Consider the following 121-residue polypeptide: Large ribosomal subunit protein uL14c (121 aa).

Belongs to the universal ribosomal protein uL14 family. Part of the 50S ribosomal subunit.

The protein resides in the plastid. It localises to the chloroplast. Binds to 23S rRNA. This Nephroselmis olivacea (Green alga) protein is Large ribosomal subunit protein uL14c.